The following is a 210-amino-acid chain: Inner membrane-spanning protein YciB (210 aa).

6 helical membrane-spanning segments follow: residues 19 to 39, 53 to 73, 78 to 98, 115 to 135, 148 to 168, and 175 to 195; these read LVLE…GDWL, IFIA…VSWI, LPMM…LTLW, LFGA…GYVF, KLTI…EIVW, and FWVA…TLAQ.

It belongs to the YciB family.

The protein localises to the cell inner membrane. Plays a role in cell envelope biogenesis, maintenance of cell envelope integrity and membrane homeostasis. The protein is Inner membrane-spanning protein YciB of Sinorhizobium fredii (strain NBRC 101917 / NGR234).